The primary structure comprises 407 residues: Divalent metal cation transporter MntH (407 aa).

A run of 11 helical transmembrane segments spans residues 16–36, 43–63, 95–115, 119–139, 152–172, 193–213, 239–259, 288–308, 318–338, 346–366, and 387–407; these read LTLL…GNFA, STFG…AMLV, WVQA…GAAV, LLLG…TWGI, FVVG…LVFS, AVYL…IYLH, IAMT…AAAF, LFGL…TLAG, FTIP…VVIA, ILVL…IPLL, and VGRL…VAMI.

The protein belongs to the NRAMP family.

It localises to the cell inner membrane. H(+)-stimulated, divalent metal cation uptake system. This Aeromonas hydrophila subsp. hydrophila (strain ATCC 7966 / DSM 30187 / BCRC 13018 / CCUG 14551 / JCM 1027 / KCTC 2358 / NCIMB 9240 / NCTC 8049) protein is Divalent metal cation transporter MntH.